A 395-amino-acid chain; its full sequence is Membrane glycoprotein spo14 (395 aa).

Topologically, residues Met-1–Arg-346 are cytoplasmic. WD repeat units lie at residues Met-250–Ser-285 and Lys-290–Phe-326. Residues Leu-347–Pro-367 traverse the membrane as a helical; Signal-anchor for type II membrane protein segment. Over Asp-368 to Leu-395 the chain is Lumenal.

Its subcellular location is the endoplasmic reticulum membrane. It is found in the golgi apparatus. The protein localises to the cis-Golgi network membrane. In terms of biological role, required for the formation of transport vesicles from the ER. This function involves the cytoplasmic domain of the protein, which is thought to interact with the small GTP-binding protein sar1. In Schizosaccharomyces pombe (strain 972 / ATCC 24843) (Fission yeast), this protein is Membrane glycoprotein spo14 (spo14).